The following is a 638-amino-acid chain: Influenza virus NS1A-binding protein homolog (638 aa).

Residues 32–99 (CDVKLQVCGH…AYTSQLKAET (68 aa)) form the BTB domain. Residues 134–233 (GISCRNFVNT…YYSADHKLLD (100 aa)) form the BACK domain. The tract at residues 251 to 273 (IQKKSPRENNHKNLISSSSGSLS) is disordered. Kelch repeat units lie at residues 365-411 (KLIA…VLMD), 412-459 (HLYV…ALNG), 461-508 (LYVV…ELGN), 509-555 (KIYI…VYDG), 557-602 (LLVV…AVGN), and 604-638 (IYAA…LCES).

It is found in the cytoplasm. Its subcellular location is the cytoskeleton. The protein resides in the nucleus. In terms of biological role, plays a role in cell division and in the dynamic organization of the actin skeleton as a stabilizer of actin filaments by association with F-actin through Kelch repeats. The sequence is that of Influenza virus NS1A-binding protein homolog (ivns1abp) from Xenopus laevis (African clawed frog).